The chain runs to 351 residues: Fe(3+) ions import ATP-binding protein FbpC (351 aa).

An ABC transporter domain is found at 7–237 (VELKNVTKRF…PASEFMASFM (231 aa)). Position 39–46 (39–46 (GPSGCGKT)) interacts with ATP.

The protein belongs to the ABC transporter superfamily. Fe(3+) ion importer (TC 3.A.1.10) family. As to quaternary structure, the complex is composed of two ATP-binding proteins (FbpC), two transmembrane proteins (FbpB) and a solute-binding protein (FbpA).

It is found in the cell inner membrane. The catalysed reaction is Fe(3+)(out) + ATP + H2O = Fe(3+)(in) + ADP + phosphate + H(+). Functionally, part of the ABC transporter complex FbpABC involved in Fe(3+) ions import. Responsible for energy coupling to the transport system. The chain is Fe(3+) ions import ATP-binding protein FbpC from Photorhabdus laumondii subsp. laumondii (strain DSM 15139 / CIP 105565 / TT01) (Photorhabdus luminescens subsp. laumondii).